The sequence spans 346 residues: Large ribosomal subunit protein uL3 (346 aa).

A disordered region spans residues 324-346 (KPPKKKPPVERPQITYVSRESKQ).

The protein belongs to the universal ribosomal protein uL3 family. As to quaternary structure, part of the 50S ribosomal subunit. Forms a cluster with proteins L14 and L24e.

Its function is as follows. One of the primary rRNA binding proteins, it binds directly near the 3'-end of the 23S rRNA, where it nucleates assembly of the 50S subunit. The protein is Large ribosomal subunit protein uL3 of Thermococcus gammatolerans (strain DSM 15229 / JCM 11827 / EJ3).